The following is a 337-amino-acid chain: 3-isopropylmalate dehydrogenase (337 aa).

Residues Arg88, Arg98, Arg122, and Asp212 each coordinate substrate. Residues Asp212, Asp236, and Asp240 each coordinate Mg(2+). 272–284 lines the NAD(+) pocket; it reads GSAPDIAGKGIAD.

Belongs to the isocitrate and isopropylmalate dehydrogenases family. LeuB type 2 subfamily. In terms of assembly, homodimer. Mg(2+) is required as a cofactor. The cofactor is Mn(2+).

Its subcellular location is the cytoplasm. The enzyme catalyses (2R,3S)-3-isopropylmalate + NAD(+) = 4-methyl-2-oxopentanoate + CO2 + NADH. It participates in amino-acid biosynthesis; L-leucine biosynthesis; L-leucine from 3-methyl-2-oxobutanoate: step 3/4. In terms of biological role, catalyzes the oxidation of 3-carboxy-2-hydroxy-4-methylpentanoate (3-isopropylmalate) to 3-carboxy-4-methyl-2-oxopentanoate. The product decarboxylates to 4-methyl-2 oxopentanoate. This chain is 3-isopropylmalate dehydrogenase, found in Rhodococcus erythropolis (strain PR4 / NBRC 100887).